The primary structure comprises 151 residues: Probable cGMP 3',5'-cyclic phosphodiesterase subunit delta (151 aa).

It belongs to the PDE6D/unc-119 family. In terms of assembly, interacts with Pde6.

The protein localises to the nucleus. It localises to the cytoplasm. The chain is Probable cGMP 3',5'-cyclic phosphodiesterase subunit delta from Drosophila virilis (Fruit fly).